The primary structure comprises 380 residues: 4-hydroxy-3-methylbut-2-en-1-yl diphosphate synthase (flavodoxin) (380 aa).

Residues Cys279, Cys282, Cys314, and Glu321 each coordinate [4Fe-4S] cluster.

This sequence belongs to the IspG family. [4Fe-4S] cluster serves as cofactor.

It carries out the reaction (2E)-4-hydroxy-3-methylbut-2-enyl diphosphate + oxidized [flavodoxin] + H2O + 2 H(+) = 2-C-methyl-D-erythritol 2,4-cyclic diphosphate + reduced [flavodoxin]. It functions in the pathway isoprenoid biosynthesis; isopentenyl diphosphate biosynthesis via DXP pathway; isopentenyl diphosphate from 1-deoxy-D-xylulose 5-phosphate: step 5/6. In terms of biological role, converts 2C-methyl-D-erythritol 2,4-cyclodiphosphate (ME-2,4cPP) into 1-hydroxy-2-methyl-2-(E)-butenyl 4-diphosphate. The sequence is that of 4-hydroxy-3-methylbut-2-en-1-yl diphosphate synthase (flavodoxin) from Tropheryma whipplei (strain TW08/27) (Whipple's bacillus).